The chain runs to 252 residues: Imidazole glycerol phosphate synthase subunit HisF (252 aa).

Residues aspartate 11 and aspartate 130 contribute to the active site.

It belongs to the HisA/HisF family. As to quaternary structure, heterodimer of HisH and HisF.

It is found in the cytoplasm. The enzyme catalyses 5-[(5-phospho-1-deoxy-D-ribulos-1-ylimino)methylamino]-1-(5-phospho-beta-D-ribosyl)imidazole-4-carboxamide + L-glutamine = D-erythro-1-(imidazol-4-yl)glycerol 3-phosphate + 5-amino-1-(5-phospho-beta-D-ribosyl)imidazole-4-carboxamide + L-glutamate + H(+). Its pathway is amino-acid biosynthesis; L-histidine biosynthesis; L-histidine from 5-phospho-alpha-D-ribose 1-diphosphate: step 5/9. Its function is as follows. IGPS catalyzes the conversion of PRFAR and glutamine to IGP, AICAR and glutamate. The HisF subunit catalyzes the cyclization activity that produces IGP and AICAR from PRFAR using the ammonia provided by the HisH subunit. This chain is Imidazole glycerol phosphate synthase subunit HisF, found in Acinetobacter baylyi (strain ATCC 33305 / BD413 / ADP1).